A 236-amino-acid polypeptide reads, in one-letter code: 7-cyano-7-deazaguanine synthase (236 aa).

ATP is bound at residue 7–17 (CSGGLDSVSLA). 4 residues coordinate Zn(2+): C185, C193, C196, and C199.

Belongs to the QueC family. Zn(2+) is required as a cofactor.

The enzyme catalyses 7-carboxy-7-deazaguanine + NH4(+) + ATP = 7-cyano-7-deazaguanine + ADP + phosphate + H2O + H(+). It participates in purine metabolism; 7-cyano-7-deazaguanine biosynthesis. Catalyzes the ATP-dependent conversion of 7-carboxy-7-deazaguanine (CDG) to 7-cyano-7-deazaguanine (preQ(0)). The polypeptide is 7-cyano-7-deazaguanine synthase (Agrobacterium fabrum (strain C58 / ATCC 33970) (Agrobacterium tumefaciens (strain C58))).